Here is a 322-residue protein sequence, read N- to C-terminus: Lipoyl synthase 2 (322 aa).

Residues methionine 1–serine 36 form a disordered region. A compositionally biased stretch (basic and acidic residues) spans threonine 14–methionine 34. 7 residues coordinate [4Fe-4S] cluster: cysteine 67, cysteine 72, cysteine 78, cysteine 93, cysteine 97, cysteine 100, and serine 306. In terms of domain architecture, Radical SAM core spans tryptophan 79–leucine 295.

It belongs to the radical SAM superfamily. Lipoyl synthase family. The cofactor is [4Fe-4S] cluster.

The protein resides in the cytoplasm. The catalysed reaction is [[Fe-S] cluster scaffold protein carrying a second [4Fe-4S](2+) cluster] + N(6)-octanoyl-L-lysyl-[protein] + 2 oxidized [2Fe-2S]-[ferredoxin] + 2 S-adenosyl-L-methionine + 4 H(+) = [[Fe-S] cluster scaffold protein] + N(6)-[(R)-dihydrolipoyl]-L-lysyl-[protein] + 4 Fe(3+) + 2 hydrogen sulfide + 2 5'-deoxyadenosine + 2 L-methionine + 2 reduced [2Fe-2S]-[ferredoxin]. It participates in protein modification; protein lipoylation via endogenous pathway; protein N(6)-(lipoyl)lysine from octanoyl-[acyl-carrier-protein]: step 2/2. Functionally, catalyzes the radical-mediated insertion of two sulfur atoms into the C-6 and C-8 positions of the octanoyl moiety bound to the lipoyl domains of lipoate-dependent enzymes, thereby converting the octanoylated domains into lipoylated derivatives. The sequence is that of Lipoyl synthase 2 from Bradyrhizobium diazoefficiens (strain JCM 10833 / BCRC 13528 / IAM 13628 / NBRC 14792 / USDA 110).